The primary structure comprises 187 residues: UPF0340 protein SMU_87 (187 aa).

It belongs to the UPF0340 family.

In Streptococcus mutans serotype c (strain ATCC 700610 / UA159), this protein is UPF0340 protein SMU_87.